A 728-amino-acid chain; its full sequence is Catalase-peroxidase 2 (728 aa).

The tract at residues 1–20 is disordered; the sequence is MSNEGKCPFNHGKRNGTTNR. Residues 91–214 constitute a cross-link (tryptophyl-tyrosyl-methioninium (Trp-Tyr) (with M-240)); sequence WHSAGTYRTG…LAAVQMGLIY (124 aa). His-92 functions as the Proton acceptor in the catalytic mechanism. Positions 214–240 form a cross-link, tryptophyl-tyrosyl-methioninium (Tyr-Met) (with W-91); it reads YVNPEGPNGNPDPLASARDIRETFARM. Residue His-255 participates in heme b binding. Residues 335–355 are disordered; it reads AHQWQPKGGAGADSVPDPFEP.

It belongs to the peroxidase family. Peroxidase/catalase subfamily. As to quaternary structure, homodimer or homotetramer. Heme b serves as cofactor. Post-translationally, formation of the three residue Trp-Tyr-Met cross-link is important for the catalase, but not the peroxidase activity of the enzyme.

It catalyses the reaction H2O2 + AH2 = A + 2 H2O. The catalysed reaction is 2 H2O2 = O2 + 2 H2O. Functionally, bifunctional enzyme with both catalase and broad-spectrum peroxidase activity. The polypeptide is Catalase-peroxidase 2 (Burkholderia cenocepacia (strain HI2424)).